A 211-amino-acid polypeptide reads, in one-letter code: Pyridoxine/pyridoxamine 5'-phosphate oxidase (211 aa).

Residues 8–11 (RKNY) and Lys-66 contribute to the substrate site. Residues 61–66 (RIVLLK), 76–77 (FT), Lys-83, and Gln-105 each bind FMN. Tyr-123, Arg-127, and Ser-131 together coordinate substrate. FMN-binding positions include 140 to 141 (QS) and Trp-184. A substrate-binding site is contributed by 190-192 (RLH). Position 194 (Arg-194) interacts with FMN.

The protein belongs to the pyridoxamine 5'-phosphate oxidase family. In terms of assembly, homodimer. FMN serves as cofactor.

It carries out the reaction pyridoxamine 5'-phosphate + O2 + H2O = pyridoxal 5'-phosphate + H2O2 + NH4(+). The catalysed reaction is pyridoxine 5'-phosphate + O2 = pyridoxal 5'-phosphate + H2O2. Its pathway is cofactor metabolism; pyridoxal 5'-phosphate salvage; pyridoxal 5'-phosphate from pyridoxamine 5'-phosphate: step 1/1. The protein operates within cofactor metabolism; pyridoxal 5'-phosphate salvage; pyridoxal 5'-phosphate from pyridoxine 5'-phosphate: step 1/1. Functionally, catalyzes the oxidation of either pyridoxine 5'-phosphate (PNP) or pyridoxamine 5'-phosphate (PMP) into pyridoxal 5'-phosphate (PLP). The protein is Pyridoxine/pyridoxamine 5'-phosphate oxidase of Polynucleobacter asymbioticus (strain DSM 18221 / CIP 109841 / QLW-P1DMWA-1) (Polynucleobacter necessarius subsp. asymbioticus).